A 242-amino-acid chain; its full sequence is Uridylate kinase (242 aa).

Position 15 to 18 (15 to 18) interacts with ATP; it reads KLSG. Residues 23–28 are involved in allosteric activation by GTP; that stretch reads GDEGFG. G57 provides a ligand contact to UMP. Positions 58 and 62 each coordinate ATP. Residues D77 and 138–145 contribute to the UMP site; that span reads TGNPFCTT. ATP-binding residues include T165, Y171, and D174.

It belongs to the UMP kinase family. As to quaternary structure, homohexamer.

The protein resides in the cytoplasm. The enzyme catalyses UMP + ATP = UDP + ADP. The protein operates within pyrimidine metabolism; CTP biosynthesis via de novo pathway; UDP from UMP (UMPK route): step 1/1. Allosterically activated by GTP. Inhibited by UTP. Functionally, catalyzes the reversible phosphorylation of UMP to UDP. This chain is Uridylate kinase, found in Shewanella sp. (strain MR-4).